Consider the following 423-residue polypeptide: Serine hydroxymethyltransferase 2 (423 aa).

Residues Leu121 and 125–127 contribute to the (6S)-5,6,7,8-tetrahydrofolate site; that span reads GHL. Residue Lys230 is modified to N6-(pyridoxal phosphate)lysine. (6S)-5,6,7,8-tetrahydrofolate is bound at residue 356-358; the sequence is SPF.

This sequence belongs to the SHMT family. As to quaternary structure, homodimer. Pyridoxal 5'-phosphate is required as a cofactor.

The protein resides in the cytoplasm. It catalyses the reaction (6R)-5,10-methylene-5,6,7,8-tetrahydrofolate + glycine + H2O = (6S)-5,6,7,8-tetrahydrofolate + L-serine. Its pathway is one-carbon metabolism; tetrahydrofolate interconversion. The protein operates within amino-acid biosynthesis; glycine biosynthesis; glycine from L-serine: step 1/1. Functionally, catalyzes the reversible interconversion of serine and glycine with tetrahydrofolate (THF) serving as the one-carbon carrier. This reaction serves as the major source of one-carbon groups required for the biosynthesis of purines, thymidylate, methionine, and other important biomolecules. Also exhibits THF-independent aldolase activity toward beta-hydroxyamino acids, producing glycine and aldehydes, via a retro-aldol mechanism. This is Serine hydroxymethyltransferase 2 from Pectobacterium atrosepticum (strain SCRI 1043 / ATCC BAA-672) (Erwinia carotovora subsp. atroseptica).